Reading from the N-terminus, the 146-residue chain is Leghemoglobin 1 (146 aa).

The Globin domain maps to 2–146 (GFTEKQEALV…LAAAIKKAMG (145 aa)). Position 29 is a nitrated tyrosine (Y29). Residue S44 participates in heme b binding. S44 carries the post-translational modification Phosphoserine. H61 contributes to the O2 binding site. Heme b contacts are provided by K64, H93, and K96. Y134 is subject to Nitrated tyrosine.

The protein belongs to the plant globin family. In terms of assembly, monomer. In terms of processing, nitrated in effective nodules and particularly in hypoxic conditions; this mechanism may play a protective role in the symbiosis by buffering toxic peroxynitrite NO(2)(-). Nitration level decrease during nodule senescence. Phosphorylation at Ser-44 disrupts the molecular environment of its porphyrin ring oxygen binding pocket, thus leading to a reduced oxygen consumption and to the delivery of oxygen O(2) to symbiosomes. Root nodules.

The protein localises to the cytoplasm. Its subcellular location is the cytosol. It localises to the nucleus. Leghemoglobin that reversibly binds oxygen O(2) through a pentacoordinated heme iron. In root nodules, facilitates the diffusion of oxygen to the bacteroids while preventing the bacterial nitrogenase from being inactivated by buffering dioxygen, nitric oxide and carbon monoxide, and promoting the formation of reactive oxygen species (ROS, e.g. H(2)O(2)). This role is essential for symbiotic nitrogen fixation (SNF). This chain is Leghemoglobin 1, found in Medicago truncatula (Barrel medic).